The chain runs to 135 residues: BolA-like protein 1 (135 aa).

S81 is subject to Phosphoserine. Residues 114-135 form a disordered region; sequence WKENPQLDTSPACLGGSKKSRN.

Belongs to the BolA/IbaG family. As to quaternary structure, interacts with GLRX5.

The protein localises to the mitochondrion. Functionally, acts as a mitochondrial iron-sulfur (Fe-S) cluster assembly factor that facilitates (Fe-S) cluster insertion into a subset of mitochondrial proteins. Probably acts together with the monothiol glutaredoxin GLRX5. May protect cells against oxidative stress. This Bos taurus (Bovine) protein is BolA-like protein 1 (BOLA1).